A 797-amino-acid chain; its full sequence is EFPKYDSITELDVYCNQNNKSDVQMYNFITKLESEYGNITVTVYKGSKTISNDKSILNECELYFVFNIGSNKRVVCLADNKTWDQSLKYWNSSKYPYPRWCDEYLTESEFVRSIGEYKFHVNNGTVKYWEKYYNFPDMVFNYSDKKHDLRIGSLDLETYGDNCFELGLGNLNVYAGGFALNDGFKKLYYLNNDTELNSGEAIIKKMFGDLFDYIAEDRKARNNYTIYAHNLGRFDSVFIIRSLCSEGYKINGQWIDNSILYLKIVDSTRKLTIKLRDSIKLVPHSLDKALSSNGCNISKGMFPHKFVNKDTLNYIGDKPDIKYYVDENKFNESKLKKYKSLPSILNLKKECLNYLDKDILGLLELMNKVSLTYFNEYKLNITKFSTLPSITLNIFGIRFYDDQNSIKMINGPLSEFIRSSYFGGNSDIFVSGEERLVKNGYHYDMNSQYPYAMLQSMPTGNPVFSTNTDLNYYRNGFVFARVTPPSKDTLVNLFIPRRSDDGSVICDRNTFYEFIPTPDLKQGLEYGYKFEVICGINFPDACGNGELFSEFVNHFYEIKSSSTDLGQKYIAKLSLNSLYGKFGQKEREYSIRLLEKDKAKEIISKNHYSYMSEVSDNYTLIKSGGRLNSKLRRLYAEQARINTINDDLLSSKFIKSRGIPSAVQISAMISSYARTSINPFKNIPGNLAIASNTDSLILRKPLEDHLIGKEIGKWKLEHKFKNGVFVKPKLYCYEDVDINELIRKASGVTASNLTYENFVELVNGKDVLTNKELFRLNWETLNIEIVNINTKISGIKE.

The protein belongs to the DNA polymerase type-B family.

It is found in the mitochondrion. The catalysed reaction is DNA(n) + a 2'-deoxyribonucleoside 5'-triphosphate = DNA(n+1) + diphosphate. The sequence is that of Probable DNA polymerase from Agaricus bitorquis (Pavement mushroom).